The following is a 186-amino-acid chain: Hydra actinoporin-like toxin 5 (186 aa).

Residues 1–20 (MLLYVCLVNLLLQSPSGVDS) form the signal peptide. A Cell attachment site motif is present at residues 158 to 160 (RDG).

This sequence belongs to the actinoporin family. HALT subfamily. As to quaternary structure, octamer or nonamer in membranes. Monomer in the soluble state. In vitro, interacts with folate receptor alpha (of target organism).

The protein localises to the nematocyst. It is found in the secreted. Its subcellular location is the target cell membrane. Pore-forming protein that forms hydrophilic pores and causes cytolysis. Compared to equinatoxin-2 (AC P61914), it reveals lower cytolysis activity (5-12-fold difference, tested on erythrocytes), a larger pore size (probably 2-3 nm) and different affinity to membrane lipids (100-fold lower affinity to sphingomyelin). Binds to sulfatides (SFT) as well as to the two sphingolipids, lysophosphatidic acid (LPA) and sphingosine-1-phosphate (S1P). It seems to bind more strongly to LPA than to S1P and SFT. Shows cytolytic activity on HeLa cells, with a different potency than its paralogs (from most potent to less potent: HALT-4&gt;HALT-6~HALT-1&gt;HALT-3&gt;HALT-7&gt;HALT-2). Pore formation is a multi-step process that involves specific recognition of membrane lipid by a protein aromatic residues rich region, firm binding to the membrane (mainly driven by hydrophobic interactions) accompanied by the transfer of the N-terminal region to the lipid-water interface and finally pore formation after oligomerization of monomers. In vitro, binds to the folate receptor alpha (FOLR1), a GPI-anchored membrane protein that plays a major role in the uptake of folate/folic acid into cells via endocytosis, suggesting a possible involvement of this receptor in the mechanism of HALT-1-induced cell lysis. In vivo, does not cause visible paralysis in larvae of the blowfly Sarcophaga faculata, the most common arthropod prey of Hydra. This chain is Hydra actinoporin-like toxin 5, found in Hydra vulgaris (Hydra).